Consider the following 242-residue polypeptide: UPF0246 protein SSA_1395 (242 aa).

It belongs to the UPF0246 family.

The chain is UPF0246 protein SSA_1395 from Streptococcus sanguinis (strain SK36).